Consider the following 417-residue polypeptide: NADH-quinone oxidoreductase subunit D (417 aa).

It belongs to the complex I 49 kDa subunit family. As to quaternary structure, NDH-1 is composed of 14 different subunits. Subunits NuoB, C, D, E, F, and G constitute the peripheral sector of the complex.

It localises to the cell inner membrane. The catalysed reaction is a quinone + NADH + 5 H(+)(in) = a quinol + NAD(+) + 4 H(+)(out). Functionally, NDH-1 shuttles electrons from NADH, via FMN and iron-sulfur (Fe-S) centers, to quinones in the respiratory chain. The immediate electron acceptor for the enzyme in this species is believed to be ubiquinone. Couples the redox reaction to proton translocation (for every two electrons transferred, four hydrogen ions are translocated across the cytoplasmic membrane), and thus conserves the redox energy in a proton gradient. The sequence is that of NADH-quinone oxidoreductase subunit D from Cupriavidus necator (strain ATCC 17699 / DSM 428 / KCTC 22496 / NCIMB 10442 / H16 / Stanier 337) (Ralstonia eutropha).